The chain runs to 1342 residues: DNA-directed RNA polymerase subunit beta (1342 aa).

This sequence belongs to the RNA polymerase beta chain family. In terms of assembly, the RNAP catalytic core consists of 2 alpha, 1 beta, 1 beta' and 1 omega subunit. When a sigma factor is associated with the core the holoenzyme is formed, which can initiate transcription.

The catalysed reaction is RNA(n) + a ribonucleoside 5'-triphosphate = RNA(n+1) + diphosphate. DNA-dependent RNA polymerase catalyzes the transcription of DNA into RNA using the four ribonucleoside triphosphates as substrates. The sequence is that of DNA-directed RNA polymerase subunit beta from Serratia proteamaculans (strain 568).